A 521-amino-acid polypeptide reads, in one-letter code: Envelope glycoprotein C homolog (521 aa).

The N-terminal stretch at 1 to 21 is a signal peptide; the sequence is MGPLGRAWLIAAIFAWALLSA. Over 22–475 the chain is Virion surface; sequence RRGLAEEAEA…DASPGLIGSP (454 aa). Residues 24–138 are disordered; it reads GLAEEAEASP…PSKAPPKERK (115 aa). Residues 41 to 54 show a composition bias toward low complexity; that stretch reads PTETESSAGTTGAT. Polar residues predominate over residues 66–76; it reads EDSTPGATTPV. N-linked (GlcNAc...) asparagine; by host glycosylation occurs at Asn111. Cys142 and Cys159 are disulfide-bonded. An Ig-like V-type domain is found at 155–227; sequence LYVHCGVADN…LGDNYIFPSP (73 aa). Asn164 and Asn208 each carry an N-linked (GlcNAc...) asparagine; by host glycan. Intrachain disulfides connect Cys290–Cys351, Cys390–Cys447, and Cys394–Cys421. The 66-residue stretch at 386–451 folds into the Ig-like C2-type domain; that stretch reads GEAVCEARCV…PVDYTCTATG (66 aa). The chain crosses the membrane as a helical span at residues 476 to 496; the sequence is VLVSVVAVACGLGAVGLLLVA. The Cytoplasmic portion of the chain corresponds to 497-521; the sequence is ASCLRRKARVIQPGLTRARALGSAP.

Belongs to the herpesviridae glycoprotein C family. Interacts with host complement component C3; this interaction inhibits host immune response by disregulating complement cascade.

Its subcellular location is the virion membrane. Essential for the initial attachment to heparan sulfate moieties of the host cell surface proteoglycans. Plays also a role in host immune evasion by inhibiting the host complement cascade activation. The chain is Envelope glycoprotein C homolog (gC) from Bovine herpesvirus 1.1 (strain Cooper) (BoHV-1).